Consider the following 177-residue polypeptide: MAESNDWLSVGKIVAVQGLLGELRVNPASDFPERFTVPGPRWLRSRQGGEPSEIQLKKGRQLPGKSLFVVRFEGVDNRSAAETLVGMELLVPADDRPELAEGEFHLLDLVGLKARLTADGPAIGTVSDLISGGNDLLEITTSDGRKLLIPFVEAIVPEVKLKAGWLLLTPPPGLLEL.

One can recognise a PRC barrel domain in the interval 101 to 174 (EGEFHLLDLV…WLLLTPPPGL (74 aa)).

This sequence belongs to the RimM family. Binds ribosomal protein uS19.

It localises to the cytoplasm. Its function is as follows. An accessory protein needed during the final step in the assembly of 30S ribosomal subunit, possibly for assembly of the head region. Essential for efficient processing of 16S rRNA. May be needed both before and after RbfA during the maturation of 16S rRNA. It has affinity for free ribosomal 30S subunits but not for 70S ribosomes. The sequence is that of Ribosome maturation factor RimM from Synechococcus sp. (strain CC9605).